Here is a 260-residue protein sequence, read N- to C-terminus: Thiazole synthase (260 aa).

Catalysis depends on Lys-96, which acts as the Schiff-base intermediate with DXP. 1-deoxy-D-xylulose 5-phosphate-binding positions include Gly-157, 184 to 185 (AG), and 206 to 207 (NT).

This sequence belongs to the ThiG family. As to quaternary structure, homotetramer. Forms heterodimers with either ThiH or ThiS.

It localises to the cytoplasm. It carries out the reaction [ThiS sulfur-carrier protein]-C-terminal-Gly-aminoethanethioate + 2-iminoacetate + 1-deoxy-D-xylulose 5-phosphate = [ThiS sulfur-carrier protein]-C-terminal Gly-Gly + 2-[(2R,5Z)-2-carboxy-4-methylthiazol-5(2H)-ylidene]ethyl phosphate + 2 H2O + H(+). Its pathway is cofactor biosynthesis; thiamine diphosphate biosynthesis. Catalyzes the rearrangement of 1-deoxy-D-xylulose 5-phosphate (DXP) to produce the thiazole phosphate moiety of thiamine. Sulfur is provided by the thiocarboxylate moiety of the carrier protein ThiS. In vitro, sulfur can be provided by H(2)S. In Rhodopseudomonas palustris (strain TIE-1), this protein is Thiazole synthase.